A 79-amino-acid polypeptide reads, in one-letter code: Acyl carrier protein (79 aa).

A Carrier domain is found at 2 to 77 (SDVLERVRKI…DAVKFIQERL (76 aa)). Ser-37 is modified (O-(pantetheine 4'-phosphoryl)serine).

Belongs to the acyl carrier protein (ACP) family. In terms of processing, 4'-phosphopantetheine is transferred from CoA to a specific serine of apo-ACP by AcpS. This modification is essential for activity because fatty acids are bound in thioester linkage to the sulfhydryl of the prosthetic group.

The protein resides in the cytoplasm. It participates in lipid metabolism; fatty acid biosynthesis. In terms of biological role, carrier of the growing fatty acid chain in fatty acid biosynthesis. The chain is Acyl carrier protein from Phenylobacterium zucineum (strain HLK1).